An 87-amino-acid polypeptide reads, in one-letter code: Prolactin-releasing peptide (87 aa).

The first 22 residues, 1–22 (MKVLRAWLLCLLMLGLALRGAA), serve as a signal peptide directing secretion. A Phenylalanine amide modification is found at Phe53. The propeptide occupies 58 to 87 (ATLGDVPKPGLRPRLTCFPLEGGAMSSQDG).

As to expression, medulla oblongata and hypothalamus.

It is found in the secreted. Stimulates prolactin (PRL) release and regulates the expression of prolactin through its receptor GPR10. May stimulate lactotrophs directly to secrete PRL. In Homo sapiens (Human), this protein is Prolactin-releasing peptide (PRLH).